We begin with the raw amino-acid sequence, 155 residues long: MVDLTQVMDDEVFMAFASYATIILSKMMLMSTATAFYRLTRKVFANPEDCVAFGKGENAKKYLRTDDRVERVRRAHLNDLENIIPFLGIGLLYSLSGPDPSTAILHFRLFVGARIYHTIAYLTPLPQPNRALSFFVGYGVTLSMAYRLLKSKLYL.

Over 3–9 the chain is Lumenal; that stretch reads DLTQVMD. Residues 10 to 33 form a helical membrane-spanning segment; the sequence is DEVFMAFASYATIILSKMMLMSTA. At 34 to 62 the chain is on the cytoplasmic side; the sequence is TAFYRLTRKVFANPEDCVAFGKGENAKKY. Arg-38 is a binding site for glutathione. Lys-42, Lys-55, and Lys-60 each carry N6-acetyllysine. A helical transmembrane segment spans residues 63-96; it reads LRTDDRVERVRRAHLNDLENIIPFLGIGLLYSLS. Residues Arg-73, Arg-74, His-76, and Glu-81 each coordinate glutathione. Over 97 to 99 the chain is Lumenal; the sequence is GPD. The chain crosses the membrane as a helical span at residues 100–123; it reads PSTAILHFRLFVGARIYHTIAYLT. Tyr-121 lines the glutathione pocket. The Cytoplasmic portion of the chain corresponds to 124–128; the sequence is PLPQP. The helical transmembrane segment at 129-148 threads the bilayer; sequence NRALSFFVGYGVTLSMAYRL. Residues 149–155 lie on the Lumenal side of the membrane; it reads LKSKLYL.

It belongs to the MAPEG family. Homotrimer; The trimer binds only one molecule of glutathione. Highly expressed in liver.

The protein resides in the endoplasmic reticulum membrane. It localises to the mitochondrion outer membrane. The catalysed reaction is RX + glutathione = an S-substituted glutathione + a halide anion + H(+). Conjugation of reduced glutathione to a wide number of exogenous and endogenous hydrophobic electrophiles. This Homo sapiens (Human) protein is Microsomal glutathione S-transferase 1 (MGST1).